We begin with the raw amino-acid sequence, 157 residues long: Ciliary microtubule inner protein 5 (157 aa).

2 disordered regions span residues M1–G57 and D92–S124. Basic and acidic residues predominate over residues D92–R109.

The protein resides in the cell projection. The protein localises to the cilium. This is Ciliary microtubule inner protein 5 (CIMIP5) from Bos taurus (Bovine).